Consider the following 811-residue polypeptide: Metal transporter cnnm-1 (811 aa).

Positions 1 to 24 (MSASCLRLLTLSLFILGQCNVTAA) are cleaved as a signal peptide. Asparagine 20, asparagine 49, asparagine 61, and asparagine 122 each carry an N-linked (GlcNAc...) asparagine glycan. Topologically, residues 25–204 (QNGVDDEVTT…KEYFLPLPLQ (180 aa)) are extracellular. Residues 197 to 376 (YFLPLPLQIA…TDNGQVSNEL (180 aa)) form the CNNM transmembrane domain. The helical transmembrane segment at 205 to 225 (IACIGFLLCLSALFSGLTLGL) threads the bilayer. Topologically, residues 226–259 (MSLTPQELELVIKSGAIKEQKCAAKILPVRKKGN) are cytoplasmic. The helical transmembrane segment at 260–280 (LLLCSLLLGNVIVNSAISILM) threads the bilayer. Over 281 to 284 (GELT) the chain is Extracellular. The chain crosses the membrane as a helical span at residues 285-305 (TGIYALIGSTMGIVIFGEILP). Over 306 to 315 (QSICVKKGLE) the chain is Cytoplasmic. A helical transmembrane segment spans residues 316-336 (VGAHTISITQLFIFLTFPIAW). The Extracellular portion of the chain corresponds to 337–811 (PVSKLLDCLL…EEEMALLDQP (475 aa)). CBS domains follow at residues 394–456 (MTKI…NFTV) and 462–530 (YHKH…INDE). 2 N-linked (GlcNAc...) asparagine glycosylation sites follow: asparagine 435 and asparagine 453. The tract at residues 741–760 (DVSHNSSAHNSNLSLVEKPG) is disordered. Positions 743 to 755 (SHNSSAHNSNLSL) are enriched in low complexity. 2 N-linked (GlcNAc...) asparagine glycosylation sites follow: asparagine 745 and asparagine 752.

It belongs to the ACDP family. Highly expressed in the intestine and in neurons, but it is also expressed in a variety of tissues including the pharynx, hypodermis, rectum and in muscles.

It localises to the basolateral cell membrane. Functionally, probable metal transporter. Probably acts redundantly with the other metal transport proteins cnnm-2, cnnm-3, cnnm-4 and cnnm-5 to regulate Mg(2+) homeostasis. Promotes postembryonic gonad development by regulating Mg(2+) levels, probably via AMPK signaling. This Caenorhabditis elegans protein is Metal transporter cnnm-1.